A 1318-amino-acid polypeptide reads, in one-letter code: Major tegument protein (1318 aa).

Belongs to the herpesviridae MTP family. As to quaternary structure, interacts with host DAXX; this interaction disrupts the chromatin remodeling complex ATRX:DAXX and thus allows viral transcription. Interacts with host SMC6; this interaction targets SMC5-SMC6 complex for proteasomal degradation.

It is found in the virion tegument. It localises to the host nucleus. In terms of biological role, tegument protein that plays a role in the inhibition of host intrinsic defenses to promote viral early gene activation. Interacts with host DAXX and thereby disrupts the complex between DAXX and ATRX. Suppresses the DAXX-ATRX dependent deposition of histone H3.3 on viral chromatin allowing viral transcription. Targets also host SMC5/6 for proteasomal degradation in a CUL7 and calpain-dependent manner to support nuclear membrane-less replication compartment formation and lytic virus replication. The chain is Major tegument protein from Epstein-Barr virus (strain GD1) (HHV-4).